Consider the following 111-residue polypeptide: Cornifelin homolog (111 aa).

This sequence belongs to the cornifelin family.

In Xenopus tropicalis (Western clawed frog), this protein is Cornifelin homolog (cnfn).